The following is a 178-amino-acid chain: Ribosomal RNA small subunit methyltransferase G (178 aa).

Residues glycine 54, leucine 59, 105–106, and arginine 120 each bind S-adenosyl-L-methionine; that span reads LE.

Belongs to the methyltransferase superfamily. RNA methyltransferase RsmG family.

The protein resides in the cytoplasm. The catalysed reaction is guanosine(527) in 16S rRNA + S-adenosyl-L-methionine = N(7)-methylguanosine(527) in 16S rRNA + S-adenosyl-L-homocysteine. Specifically methylates the N7 position of guanine in position 527 of 16S rRNA. This chain is Ribosomal RNA small subunit methyltransferase G, found in Helicobacter pylori (strain ATCC 700392 / 26695) (Campylobacter pylori).